The following is a 151-amino-acid chain: MATSGTYVTEVPLKGSAEKHYKRWRSENHLFPDAIGHHIQGVTIHDGEWDSHGAIKIWNYTCDGKPEVFKERREIDDENMAVTFRGLEGHVMEQLKVYDVIFQFIQKSPDDIICKITMIWEKQNDDMPEPSNYMKFVKSLAADMDDHVLKA.

The protein belongs to the MLP family.

This Arabidopsis thaliana (Mouse-ear cress) protein is MLP-like protein 328 (MLP328).